Consider the following 496-residue polypeptide: Glycerol kinase (496 aa).

T12 provides a ligand contact to ADP. The ATP site is built by T12, T13, and S14. T12 is a sn-glycerol 3-phosphate binding site. ADP is bound at residue R16. Residues R82, E83, and Y134 each coordinate sn-glycerol 3-phosphate. Residues R82, E83, and Y134 each contribute to the glycerol site. A Phosphohistidine; by HPr modification is found at H230. D244 is a binding site for sn-glycerol 3-phosphate. Residues D244 and Q245 each contribute to the glycerol site. T266 and G309 together coordinate ADP. The ATP site is built by T266, G309, Q313, and G410. ADP is bound by residues G410 and N414.

It belongs to the FGGY kinase family. Post-translationally, the phosphoenolpyruvate-dependent sugar phosphotransferase system (PTS), including enzyme I, and histidine-containing protein (HPr) are required for the phosphorylation of, which leads to the activation of the enzyme.

The catalysed reaction is glycerol + ATP = sn-glycerol 3-phosphate + ADP + H(+). It functions in the pathway polyol metabolism; glycerol degradation via glycerol kinase pathway; sn-glycerol 3-phosphate from glycerol: step 1/1. Inhibited by fructose 1,6-bisphosphate and p-chloromercuribenzoate (PCMB). In terms of biological role, key enzyme in the regulation of glycerol uptake and metabolism. Catalyzes the phosphorylation of glycerol to yield sn-glycerol 3-phosphate. This chain is Glycerol kinase, found in Thermus thermophilus.